Reading from the N-terminus, the 532-residue chain is MEVQRNFFIFAFLFVSFLLWQAWQSQMFLNKKTNEKIDPIFHFIDVKKNKKKIFIKNDVISLVVNMYGGDVEEASLLAYKDTLYSSRPFKLLETGSDFIYQAQSGLIGKDGPDSSINDSRPLYSANKNFFVLGPNEKELRVPIKWLSKNGVIYKKTFILKPNRYDVQIEYDVYNPSKESLNMNIFGQIKQTINLPKKRNVYSGNFALQTFRGAAYSSDDNKYEKYKFDMIANNKNLHIMTESGWIAMLQQYFAVAWIPDNLGKNTIYTSSLDHDTAVIGYKSPIINIPPNSRSIIKSKLWIGPKIQKEMKLVAPNLDLTVDYGWLWFLSQPLFKLLTILYSIIGNWGFSIILITFIMRGLTYPLTKAQYISMAKMRALQPKIQEIKEKFSKDKQRISQEMILLYKKEKINPLGGFLPIFIQMPIFLSLYYMLIGSVELRHAPFLLWIHDLSSQDPYYVLPVIMGLTMFFIQKISSTNHISDPLQKKIMNFMPVIFTAFFLWFPSGLVLYYIISNLVTIIQQKFILSNLEKNR.

Transmembrane regions (helical) follow at residues 7–27 (FFIF…QSQM), 336–356 (LTIL…ITFI), 413–433 (GGFL…YMLI), 450–470 (LSSQ…MFFI), and 492–512 (PVIF…YYII).

The protein belongs to the OXA1/ALB3/YidC family. Type 1 subfamily. As to quaternary structure, interacts with the Sec translocase complex via SecD. Specifically interacts with transmembrane segments of nascent integral membrane proteins during membrane integration.

It is found in the cell membrane. Functionally, required for the insertion and/or proper folding and/or complex formation of integral membrane proteins into the membrane. Involved in integration of membrane proteins that insert both dependently and independently of the Sec translocase complex, as well as at least some lipoproteins. Aids folding of multispanning membrane proteins. The chain is Membrane protein insertase YidC from Buchnera aphidicola subsp. Acyrthosiphon pisum (strain APS) (Acyrthosiphon pisum symbiotic bacterium).